Consider the following 810-residue polypeptide: ATP-dependent RNA helicase dbp4 (810 aa).

A disordered region spans residues M1–D28. Residues T9 to R25 show a composition bias toward basic residues. The short motif at K47–S75 is the Q motif element. In terms of domain architecture, Helicase ATP-binding spans I78–V252. Residue A91–T98 coordinates ATP. The DEAD box motif lies at D200–D203. The region spanning K278 to C437 is the Helicase C-terminal domain. Disordered regions lie at residues G494–F542, A590–V615, and E690–G810. Positions G522–F542 are enriched in basic and acidic residues. Basic and acidic residues predominate over residues E690–K704. Over residues Q705–R714 the composition is skewed to basic residues. Basic and acidic residues predominate over residues K764–D786.

This sequence belongs to the DEAD box helicase family. DDX10/DBP4 subfamily. As to quaternary structure, interacts with the U3 and U14 snoRNAs. Associates with pre-ribosomal complexes.

It is found in the nucleus. The protein localises to the nucleolus. It carries out the reaction ATP + H2O = ADP + phosphate + H(+). Its function is as follows. ATP-dependent RNA helicase required for ribosome biogenesis. Involved in the release of U14 snoRNA in pre-ribosomal complexes. Required for pre-rRNA cleavage at site A2. The sequence is that of ATP-dependent RNA helicase dbp4 (dbp4) from Neosartorya fischeri (strain ATCC 1020 / DSM 3700 / CBS 544.65 / FGSC A1164 / JCM 1740 / NRRL 181 / WB 181) (Aspergillus fischerianus).